A 135-amino-acid chain; its full sequence is Ribosome-binding factor A (135 aa).

The protein belongs to the RbfA family. As to quaternary structure, monomer. Binds 30S ribosomal subunits, but not 50S ribosomal subunits or 70S ribosomes.

It is found in the cytoplasm. In terms of biological role, one of several proteins that assist in the late maturation steps of the functional core of the 30S ribosomal subunit. Associates with free 30S ribosomal subunits (but not with 30S subunits that are part of 70S ribosomes or polysomes). Required for efficient processing of 16S rRNA. May interact with the 5'-terminal helix region of 16S rRNA. This is Ribosome-binding factor A from Rhizobium meliloti (strain 1021) (Ensifer meliloti).